The sequence spans 434 residues: Serine hydroxymethyltransferase (434 aa).

Residues leucine 124 and 128-130 (GHL) each bind (6S)-5,6,7,8-tetrahydrofolate. Lysine 233 is modified (N6-(pyridoxal phosphate)lysine). (6S)-5,6,7,8-tetrahydrofolate is bound at residue glutamate 249.

Belongs to the SHMT family. Homodimer. Pyridoxal 5'-phosphate serves as cofactor.

Its subcellular location is the cytoplasm. The enzyme catalyses (6R)-5,10-methylene-5,6,7,8-tetrahydrofolate + glycine + H2O = (6S)-5,6,7,8-tetrahydrofolate + L-serine. It functions in the pathway one-carbon metabolism; tetrahydrofolate interconversion. Its pathway is amino-acid biosynthesis; glycine biosynthesis; glycine from L-serine: step 1/1. In terms of biological role, catalyzes the reversible interconversion of serine and glycine with tetrahydrofolate (THF) serving as the one-carbon carrier. This reaction serves as the major source of one-carbon groups required for the biosynthesis of purines, thymidylate, methionine, and other important biomolecules. Also exhibits THF-independent aldolase activity toward beta-hydroxyamino acids, producing glycine and aldehydes, via a retro-aldol mechanism. The polypeptide is Serine hydroxymethyltransferase (Synechococcus sp. (strain JA-3-3Ab) (Cyanobacteria bacterium Yellowstone A-Prime)).